Consider the following 387-residue polypeptide: MSVIKMTDLDLAGKRVFIRADLNVPVKEGKVTSDARIRASLPTIELALKQGAKVMVTSHLGRPTEGEYNEEFSLLPVVNYLKDKLSNPVRLVKDYLDGVDVAEGELVVLENVRFNKGEKKDDEALSKKYAALCDVFVMDAFGTAHRAQASTHGIGKFADVACAGPLLAAELDALGKALKEPARPMVAIVGGSKVSTKLTVLDSLSKIADQLIVGGGIANTFVAAQGHSVGKSLYEADLVDEAKRLLTTCDIPVPTDVRVATEFSETAPATLKSVNDVKEDEQILDIGDASAQQLAEILKNAKTILWNGPVGVFEFPNFRKGTEIVANAIADSEAFSIAGGGDTLAAIDLFGIADKISYISTGGGAFLEFVEGKVLPAVAMLEERAKK.

Substrate is bound by residues 21–23 (DLN), arginine 36, 59–62 (HLGR), arginine 113, and arginine 146. ATP contacts are provided by residues lysine 197, glutamate 314, and 340–343 (GGDT).

This sequence belongs to the phosphoglycerate kinase family. Monomer.

It localises to the cytoplasm. It carries out the reaction (2R)-3-phosphoglycerate + ATP = (2R)-3-phospho-glyceroyl phosphate + ADP. The protein operates within carbohydrate degradation; glycolysis; pyruvate from D-glyceraldehyde 3-phosphate: step 2/5. In Salmonella schwarzengrund (strain CVM19633), this protein is Phosphoglycerate kinase.